The following is a 261-amino-acid chain: uncharacterized protein (261 aa).

Residues Ile33, Asp78, and Asn105 each contribute to the NADP(+) site. Ser157 functions as the Proton donor in the catalytic mechanism. Tyr172, Lys176, and Ser206 together coordinate NADP(+). Tyr172 serves as the catalytic Proton acceptor. Lys176 functions as the Lowers pKa of active site Tyr in the catalytic mechanism.

Belongs to the short-chain dehydrogenases/reductases (SDR) family.

The protein resides in the cytoplasm. It is found in the nucleus. This is an uncharacterized protein from Schizosaccharomyces pombe (strain 972 / ATCC 24843) (Fission yeast).